Consider the following 426-residue polypeptide: D-tagatose-1,6-bisphosphate aldolase subunit KbaZ (426 aa).

Belongs to the GatZ/KbaZ family. KbaZ subfamily. In terms of assembly, forms a complex with KbaY.

The protein operates within carbohydrate metabolism; D-tagatose 6-phosphate degradation; D-glyceraldehyde 3-phosphate and glycerone phosphate from D-tagatose 6-phosphate: step 2/2. Component of the tagatose-1,6-bisphosphate aldolase KbaYZ that is required for full activity and stability of the Y subunit. Could have a chaperone-like function for the proper and stable folding of KbaY. When expressed alone, KbaZ does not show any aldolase activity. The sequence is that of D-tagatose-1,6-bisphosphate aldolase subunit KbaZ from Escherichia fergusonii (strain ATCC 35469 / DSM 13698 / CCUG 18766 / IAM 14443 / JCM 21226 / LMG 7866 / NBRC 102419 / NCTC 12128 / CDC 0568-73).